We begin with the raw amino-acid sequence, 568 residues long: U6 small nuclear RNA (adenine-(43)-N(6))-methyltransferase (568 aa).

Residues 1-20 are disordered; it reads MSEIDTNDIKKEMDNKNYRD. Over residues 7–20 the composition is skewed to basic and acidic residues; the sequence is NDIKKEMDNKNYRD. Residues arginine 117, glycine 151, aspartate 175, and asparagine 250 each coordinate S-adenosyl-L-methionine. Disordered stretches follow at residues 363-383, 403-431, and 503-538; these read KENN…INNN, NLDS…NNNN, and DPKI…NKNN. Low complexity-rich tracts occupy residues 365-383, 409-431, and 507-538; these read NNNI…INNN, NNNN…NNNN, and NNNN…NKNN.

It belongs to the methyltransferase superfamily. METTL16/RlmF family.

The catalysed reaction is adenosine in U6 snRNA + S-adenosyl-L-methionine = N(6)-methyladenosine in U6 snRNA + S-adenosyl-L-homocysteine + H(+). In terms of biological role, RNA N6-methyltransferase that mediates N6-methylation of adenine of U6 small nuclear RNA (U6 snRNA). The polypeptide is U6 small nuclear RNA (adenine-(43)-N(6))-methyltransferase (Dictyostelium discoideum (Social amoeba)).